We begin with the raw amino-acid sequence, 501 residues long: DEAD-box ATP-dependent RNA helicase 20 (501 aa).

Composition is skewed to basic and acidic residues over residues 1-20 and 38-53; these read MSRY…RRSD and SKKD…KLDL. A disordered region spans residues 1–53; that stretch reads MSRYDSRTGDSTSYRDRRSDSGFGGTSSYGSSGSHTSSKKDNDGNESPRKLDL. Residues 99–127 carry the Q motif motif; that stretch reads KSFRDVGFPDYVLEEVKKAGFTEPTPIQS. Residues 130-305 form the Helicase ATP-binding domain; sequence WPMAMKGRDL…KKFLYNPYKV (176 aa). 143-150 contributes to the ATP binding site; the sequence is AETGSGKT. Residues 253-256 carry the DEAD box motif; it reads DEAD. Residues 333-478 form the Helicase C-terminal domain; that stretch reads KLVKLLEDIM…KVSPELASMG (146 aa). The interval 473 to 501 is disordered; the sequence is ELASMGRSTAPPPPGLGGFRDRGSRRGWS. Over residues 491–501 the composition is skewed to basic and acidic residues; sequence FRDRGSRRGWS.

The protein belongs to the DEAD box helicase family. DDX5/DBP2 subfamily.

Its subcellular location is the nucleus. The catalysed reaction is ATP + H2O = ADP + phosphate + H(+). ATP-dependent RNA helicase involved nonsense-mediated mRNA decay and ribosome biogenesis through rRNA processing. The sequence is that of DEAD-box ATP-dependent RNA helicase 20 (RH20) from Arabidopsis thaliana (Mouse-ear cress).